The chain runs to 311 residues: 3-oxo-4,17-pregnadiene-20-carboxyl-CoA hydratase alpha subunit (311 aa).

The DUF35 stretch occupies residues 198–295 (WDGVKAHELR…VAIGMPVRAT (98 aa)).

This sequence belongs to the thioester dehydratase family. In terms of assembly, heterodimer composed of ChsH1 and ChsH2. Two heterodimers combine to form a heterotetramer. The complex interacts with Ltp2 via the DUF35 C-terminal region of ChsH2. The ChsH1-ChsH2-Ltp2 protein complex is composed of two protomers that form a heterohexameric structure through the Ltp2 dimerization interface.

The catalysed reaction is 3-oxochola-4,17-dien-22-oyl-CoA + H2O = 17-hydroxy-3-oxochol-4-en-22-oyl-CoA. It carries out the reaction (2E)-octenoyl-CoA + H2O = 3-hydroxyoctanoyl-CoA. The enzyme catalyses (2E)-decenoyl-CoA + H2O = 3-hydroxydecanoyl-CoA. Its pathway is steroid metabolism; cholesterol degradation. In the absence of the Ltp2 aldolase, ChsH1/ChsH2 can hydrate only about 30% of the 3-OPDC-CoA substrate. Complete turnover requires the presence of Ltp2. In terms of biological role, involved in cholesterol side chain degradation. Catalyzes the hydration of 3-oxo-4,17-pregnadiene-20-carboxyl-CoA (3-OPDC-CoA) to form 17-hydroxy-3-oxo-4-pregnene-20-carboxyl-CoA (17-HOPC-CoA), in the modified beta-oxidation pathway for cholesterol side chain degradation. Can also use octenoyl-CoA and decenoyl-CoA, with lower efficiency. The chain is 3-oxo-4,17-pregnadiene-20-carboxyl-CoA hydratase alpha subunit from Mycobacterium tuberculosis (strain ATCC 25618 / H37Rv).